The chain runs to 249 residues: Ribosomal RNA small subunit methyltransferase J (249 aa).

Asp169 provides a ligand contact to S-adenosyl-L-methionine.

The protein belongs to the methyltransferase superfamily. RsmJ family.

The protein resides in the cytoplasm. The catalysed reaction is guanosine(1516) in 16S rRNA + S-adenosyl-L-methionine = N(2)-methylguanosine(1516) in 16S rRNA + S-adenosyl-L-homocysteine + H(+). Functionally, specifically methylates the guanosine in position 1516 of 16S rRNA. This Buchnera aphidicola subsp. Schizaphis graminum (strain Sg) protein is Ribosomal RNA small subunit methyltransferase J.